Reading from the N-terminus, the 287-residue chain is Universal stress protein Slr1230 (287 aa).

It belongs to the universal stress protein A family.

In Synechocystis sp. (strain ATCC 27184 / PCC 6803 / Kazusa), this protein is Universal stress protein Slr1230.